Reading from the N-terminus, the 115-residue chain is NADH-ubiquinone oxidoreductase chain 3 (115 aa).

3 consecutive transmembrane segments (helical) span residues I3–W23, F55–L75, and M87–L107.

Belongs to the complex I subunit 3 family. In terms of assembly, core subunit of respiratory chain NADH dehydrogenase (Complex I) which is composed of 45 different subunits. Interacts with TMEM186. Interacts with TMEM242.

Its subcellular location is the mitochondrion inner membrane. The enzyme catalyses a ubiquinone + NADH + 5 H(+)(in) = a ubiquinol + NAD(+) + 4 H(+)(out). Its function is as follows. Core subunit of the mitochondrial membrane respiratory chain NADH dehydrogenase (Complex I) which catalyzes electron transfer from NADH through the respiratory chain, using ubiquinone as an electron acceptor. Essential for the catalytic activity of complex I. In Dasypus novemcinctus (Nine-banded armadillo), this protein is NADH-ubiquinone oxidoreductase chain 3.